The primary structure comprises 548 residues: Thermostable neutral protease NprT (548 aa).

Positions 1-25 (MNKRAMLGAIGLAFGLLAAPIGASA) are cleaved as a signal peptide. Residues 26-229 (KGESIVWNEQ…DSRQPGGGQP (204 aa)) constitute a propeptide, activation peptide. Residues Asp-289, Asp-291, Gln-293, and Asp-370 each coordinate Ca(2+). His-374 provides a ligand contact to Zn(2+). Residue Glu-375 is part of the active site. Residues His-378 and Glu-398 each contribute to the Zn(2+) site. Residues Glu-409, Asn-415, Asp-417, Glu-419, Glu-422, Tyr-425, Thr-426, Val-429, and Asp-432 each contribute to the Ca(2+) site. His-463 acts as the Proton donor in catalysis.

This sequence belongs to the peptidase M4 family. It depends on Ca(2+) as a cofactor. Requires Zn(2+) as cofactor.

The protein localises to the secreted. Its activity is regulated as follows. Its casein hydrolytic activity is inhibited almost completely by a chelating agent (EDTA), whereas neither diisopropyl fluorophosphate nor phenylmethylsulfonyl fluoride inhibit the proteolytic activity in vitro. Its function is as follows. Extracellular zinc metalloprotease. The sequence is that of Thermostable neutral protease NprT (nprT) from Geobacillus stearothermophilus (Bacillus stearothermophilus).